Reading from the N-terminus, the 332-residue chain is MALLCYNRGCGQRFDPETNSDDACTYHPGVPVFHDALKGWSCCKRRTTDFSDFLSIVGCTKGRHNSEKPPEPVKPEVKTTEKKELCELKPKFQEHIIQAPKPVEAIKRPSPDEPMTNLELKISASLKQALDKLKLSSGNEENKKEEDNDEIKIGTSCKNGGCSKTYQGLESLEEVCVYHSGVPIFHEGMKYWSCCRRKTSDFNTFLAQEGCTKGKHMWTKKDAGKKVVPCRHDWHQTGGEVTISVYAKNSLPELSRVEANSTLLNVHIVFEGEKEFDQNVKLWGVIDVKRSYVTMTATKIEITMRKAEPMQWASLELPAAKKQEKQKDATTD.

Position 2 is an N-acetylalanine (Ala-2). The interaction with PPP5C stretch occupies residues 2–77 (ALLCYNRGCG…KPPEPVKPEV (76 aa)). Zn(2+) is bound by residues Cys-5, Cys-10, Cys-24, His-27, Cys-42, and Cys-43. CHORD domains are found at residues 5 to 64 (CYNR…KGRH) and 157 to 216 (CKNG…KGKH). Thr-47 carries the post-translational modification Phosphothreonine. Position 51 is a phosphoserine (Ser-51). Zn(2+) contacts are provided by Cys-59, His-64, Cys-157, Cys-162, Cys-176, His-179, Cys-194, Cys-195, Cys-211, and His-216. Positions 65–316 (NSEKPPEPVK…AEPMQWASLE (252 aa)) are interaction with HSP90AA1 and HSP90AB1. Residues 227–316 (VVPCRHDWHQ…AEPMQWASLE (90 aa)) enclose the CS domain.

As to quaternary structure, interacts with HSP90AA1, ROCK1 and ROCK2. Interacts with HSP90AB1 and PPP5C. As to expression, underexpressed in many breast and lung cancers.

Functionally, regulates centrosome duplication, probably by inhibiting the kinase activity of ROCK2. Proposed to act as co-chaperone for HSP90. May play a role in the regulation of NOD1 via a HSP90 chaperone complex. In vitro, has intrinsic chaperone activity. This function may be achieved by inhibiting association of ROCK2 with NPM1. Plays a role in ensuring the localization of the tyrosine kinase receptor EGFR to the plasma membrane, and thus ensures the subsequent regulation of EGFR activity and EGF-induced actin cytoskeleton remodeling. Involved in stress response. Prevents tumorigenesis. The protein is Cysteine and histidine-rich domain-containing protein 1 (CHORDC1) of Homo sapiens (Human).